We begin with the raw amino-acid sequence, 183 residues long: Apo-citrate lyase phosphoribosyl-dephospho-CoA transferase (183 aa).

This sequence belongs to the CitX family.

The catalysed reaction is apo-[citrate lyase ACP] + 2'-(5''-triphospho-alpha-D-ribosyl)-3'-dephospho-CoA = holo-[citrate lyase ACP] + diphosphate. In terms of biological role, transfers 2-(5''-triphosphoribosyl)-3'-dephosphocoenzyme-A on a serine residue to the apo-acyl carrier protein (gamma chain) of the citrate lyase to yield holo-acyl carrier protein. The chain is Apo-citrate lyase phosphoribosyl-dephospho-CoA transferase from Escherichia coli O9:H4 (strain HS).